The sequence spans 120 residues: Small ribosomal subunit protein uS13 (120 aa).

Positions 92–120 are disordered; sequence RRGLPCRGQRTRTNARTRKGPRKPIAGKK.

The protein belongs to the universal ribosomal protein uS13 family. As to quaternary structure, part of the 30S ribosomal subunit. Forms a loose heterodimer with protein S19. Forms two bridges to the 50S subunit in the 70S ribosome.

In terms of biological role, located at the top of the head of the 30S subunit, it contacts several helices of the 16S rRNA. In the 70S ribosome it contacts the 23S rRNA (bridge B1a) and protein L5 of the 50S subunit (bridge B1b), connecting the 2 subunits; these bridges are implicated in subunit movement. Contacts the tRNAs in the A and P-sites. This chain is Small ribosomal subunit protein uS13, found in Laribacter hongkongensis (strain HLHK9).